The chain runs to 495 residues: MTVMSIQDNLTINEKKVLLALEELRSAVPDKLEEKSGLQIDAAMQAAFMLQEKELASVSEKVLERYSLTKEGEEYKKTGLPERQIIDALKNPVSLEELRSCFSPQTVGIATGWLVKKGWAKVENGIMVPSGEASEGKDEKALSAFAGKAKTLEELGADEGTVKDLLKRKLVVKHEEKFRTVSITDAGSELASQGLVLEEEIAQLTPELLKSGAWKEKKFRPYRLDITPKPLYGTKIHPYRRLIEQMRQIFLEMGFTEIKGGIIQSSFWNFDALFQPQDHPARDMQDTFHLGSTCQIPAEYSGKVAAMHENGGDIDSCGWGGIWDRELAGRNVLRTHTTSVTIKYLADNPEPPVKAFCIDRAYRRETIDPTHTPEFEQLEGVVMDKDMSFADLLGLLAEFYHRMGFEEVRFRPGYFPYTEPSVEPEVYVDGLGWVELGGAGVFRKEVTEPLGIKAPVLAWGLGVSRLAMLKLGLKDLRLLYQSDIDWLRKSEVCKI.

Residues threonine 338, 377–379 (QLE), and tyrosine 417 each bind L-phenylalanine. Residue glutamate 419 participates in Mg(2+) binding. Phenylalanine 442 is a binding site for L-phenylalanine.

This sequence belongs to the class-II aminoacyl-tRNA synthetase family. Phe-tRNA synthetase alpha subunit type 2 subfamily. In terms of assembly, tetramer of two alpha and two beta subunits. The cofactor is Mg(2+).

The protein localises to the cytoplasm. It carries out the reaction tRNA(Phe) + L-phenylalanine + ATP = L-phenylalanyl-tRNA(Phe) + AMP + diphosphate + H(+). The chain is Phenylalanine--tRNA ligase alpha subunit from Methanosarcina mazei (strain ATCC BAA-159 / DSM 3647 / Goe1 / Go1 / JCM 11833 / OCM 88) (Methanosarcina frisia).